The primary structure comprises 527 residues: tRNA-2-methylthio-N(6)-dimethylallyladenosine synthase (527 aa).

A disordered region spans residues methionine 1–aspartate 27. Residues glutamate 15 to aspartate 27 show a composition bias toward basic and acidic residues. The MTTase N-terminal domain maps to arginine 84–methionine 202. 6 residues coordinate [4Fe-4S] cluster: cysteine 93, cysteine 129, cysteine 163, cysteine 239, cysteine 243, and cysteine 246. A Radical SAM core domain is found at arginine 225–lysine 455. The TRAM domain occupies lysine 458–glutamate 521.

It belongs to the methylthiotransferase family. MiaB subfamily. In terms of assembly, monomer. [4Fe-4S] cluster is required as a cofactor.

The protein resides in the cytoplasm. The enzyme catalyses N(6)-dimethylallyladenosine(37) in tRNA + (sulfur carrier)-SH + AH2 + 2 S-adenosyl-L-methionine = 2-methylsulfanyl-N(6)-dimethylallyladenosine(37) in tRNA + (sulfur carrier)-H + 5'-deoxyadenosine + L-methionine + A + S-adenosyl-L-homocysteine + 2 H(+). Functionally, catalyzes the methylthiolation of N6-(dimethylallyl)adenosine (i(6)A), leading to the formation of 2-methylthio-N6-(dimethylallyl)adenosine (ms(2)i(6)A) at position 37 in tRNAs that read codons beginning with uridine. This is tRNA-2-methylthio-N(6)-dimethylallyladenosine synthase from Anoxybacillus flavithermus (strain DSM 21510 / WK1).